A 29-amino-acid polypeptide reads, in one-letter code: Histone H2B (29 aa).

Residues Met1–Lys29 form a disordered region. Lys6 and Lys11 each carry N6-acetyllysine. Phosphoserine is present on Ser13. Residues Gly20–Lys29 are compositionally biased toward basic residues.

The protein belongs to the histone H2B family. The nucleosome is a histone octamer containing two molecules each of H2A, H2B, H3 and H4 assembled in one H3-H4 heterotetramer and two H2A-H2B heterodimers. The octamer wraps approximately 147 bp of DNA. In terms of processing, monoubiquitination at the C-terminal Lys gives a specific tag for epigenetic transcriptional activation and is also prerequisite for histone H3 'Lys-4' and 'Lys-79' methylation. Phosphorylated during apoptosis; which facilitates apoptotic chromatin condensation.

It localises to the nucleus. It is found in the chromosome. Its function is as follows. Core component of nucleosome. Nucleosomes wrap and compact DNA into chromatin, limiting DNA accessibility to the cellular machineries which require DNA as a template. Histones thereby play a central role in transcription regulation, DNA repair, DNA replication and chromosomal stability. DNA accessibility is regulated via a complex set of post-translational modifications of histones, also called histone code, and nucleosome remodeling. The polypeptide is Histone H2B (Cyprinus carpio (Common carp)).